We begin with the raw amino-acid sequence, 301 residues long: uncharacterized protein (301 aa).

An N-terminal signal peptide occupies residues 1-22 (MPGRFTVALVIALGGTCGVADA). The GP-PDE domain occupies 31–300 (PMIVAHRAGT…DSPLAAQQWR (270 aa)).

This is an uncharacterized protein from Mycobacterium tuberculosis (strain ATCC 25618 / H37Rv).